A 358-amino-acid chain; its full sequence is tRNA pseudouridine synthase B (358 aa).

Positions 1–50 (MTTPDAAIDSKISDSNGADKNKSAADDNAFNAPGRKRHHNNQPRRDKRDV) are disordered. The active-site Nucleophile is the aspartate 87.

It belongs to the pseudouridine synthase TruB family. Type 1 subfamily.

The catalysed reaction is uridine(55) in tRNA = pseudouridine(55) in tRNA. Responsible for synthesis of pseudouridine from uracil-55 in the psi GC loop of transfer RNAs. In Nitrobacter winogradskyi (strain ATCC 25391 / DSM 10237 / CIP 104748 / NCIMB 11846 / Nb-255), this protein is tRNA pseudouridine synthase B.